Reading from the N-terminus, the 370-residue chain is Sensor protein GtcS (370 aa).

2 helical membrane passes run 2-22 (ITAY…VFYL) and 40-60 (AWIV…VYLY). An HAMP domain is found at 66 to 118 (KRITGPLEKITDAIQKMREGEFAQRLCFKADYELTLIQEHFNEMVAHLEKTEA). The 223-residue stretch at 133–355 (DLSHDFKTPI…RLENDLPYRL (223 aa)) folds into the Histidine kinase domain.

It localises to the cell membrane. It catalyses the reaction ATP + protein L-histidine = ADP + protein N-phospho-L-histidine.. Functionally, member of the two-component regulatory system GtcS/GtcR which may act in the control of the transcription of the grs operon which encodes the multienzymes involved in the biosynthesis of the peptide antibiotic gramicidin S. Probably activates GtcR by phosphorylation. In Aneurinibacillus migulanus (Bacillus migulanus), this protein is Sensor protein GtcS (gtcS).